A 419-amino-acid polypeptide reads, in one-letter code: Elongation factor Tu, chloroplastic (419 aa).

In terms of domain architecture, tr-type G spans 10-214 (KPHVNIGTIG…TVDEHIPTPK (205 aa)). The G1 stretch occupies residues 19 to 26 (GHVDHGKT). GTP is bound at residue 19 to 26 (GHVDHGKT). Thr26 provides a ligand contact to Mg(2+). The tract at residues 60–64 (GITIN) is G2. Residues 81–84 (DCPG) are G3. Residues 81–85 (DCPGH) and 136–139 (NKAD) each bind GTP. The G4 stretch occupies residues 136 to 139 (NKAD). The G5 stretch occupies residues 174-176 (SAL).

The protein belongs to the TRAFAC class translation factor GTPase superfamily. Classic translation factor GTPase family. EF-Tu/EF-1A subfamily.

The protein resides in the plastid. Its subcellular location is the chloroplast. The enzyme catalyses GTP + H2O = GDP + phosphate + H(+). In terms of biological role, GTP hydrolase that promotes the GTP-dependent binding of aminoacyl-tRNA to the A-site of ribosomes during protein biosynthesis. The sequence is that of Elongation factor Tu, chloroplastic (tufA) from Stigeoclonium helveticum (Green alga).